Reading from the N-terminus, the 373-residue chain is Hydrogenase maturation factor HypD (373 aa).

Positions 41, 69, and 72 each coordinate Fe cation.

It belongs to the HypD family. Monomer. Interacts with HypC. Forms a complex with HypC, or HybG, and HypE. It depends on [4Fe-4S] cluster as a cofactor.

It functions in the pathway protein modification; [NiFe] hydrogenase maturation. Functionally, involved in the maturation of [NiFe] hydrogenases. Involved in the biosynthesis of the Fe(CN)(2)CO cofactor. HypD may act as a scaffold on which the Fe(CN)(2)CO cofactor is formed. In complex with HypC, accepts the cyanide ligand generated by HypF and HypE, and also coordinates the carbon monoxide ligand. Required for the formation of all three hydrogenase isoenzymes. The chain is Hydrogenase maturation factor HypD from Escherichia coli (strain K12).